Here is a 332-residue protein sequence, read N- to C-terminus: uncharacterized protein (332 aa).

The disordered stretch occupies residues 159–256 (PLEISGRGGN…PRPHPWGPGP (98 aa)). The segment covering 201-231 (RPPSPRPPSPRPPHPRPPSPRPPHPRPPSPR) has biased composition (pro residues).

The protein resides in the virion. This is an uncharacterized protein from Acanthamoeba polyphaga (Amoeba).